Here is a 175-residue protein sequence, read N- to C-terminus: Bifunctional protein PyrR (175 aa).

Substrate contacts are provided by residues 40-41, arginine 85, 102-110, arginine 135, and valine 159; these read TR and DDVLYTGRT. Positions 98–110 match the PRPP-binding motif; it reads VIIIDDVLYTGRT.

It belongs to the purine/pyrimidine phosphoribosyltransferase family. PyrR subfamily. Homodimer and homohexamer; in equilibrium.

The enzyme catalyses UMP + diphosphate = 5-phospho-alpha-D-ribose 1-diphosphate + uracil. Functionally, regulates transcriptional attenuation of the pyrimidine nucleotide (pyr) operon by binding in a uridine-dependent manner to specific sites on pyr mRNA. This disrupts an antiterminator hairpin in the RNA and favors formation of a downstream transcription terminator, leading to a reduced expression of downstream genes. Its function is as follows. Also displays a weak uracil phosphoribosyltransferase activity which is not physiologically significant. This chain is Bifunctional protein PyrR, found in Staphylococcus saprophyticus subsp. saprophyticus (strain ATCC 15305 / DSM 20229 / NCIMB 8711 / NCTC 7292 / S-41).